Consider the following 421-residue polypeptide: Inhibitor of growth protein 3 (421 aa).

Residues 129–163 (PSQPVNNHHAHSHTPVEKRKYNPTSHHAAADHIPE) form a disordered region. Glycyl lysine isopeptide (Lys-Gly) (interchain with G-Cter in SUMO2) cross-links involve residues Lys-148, Lys-165, and Lys-167. Residue Lys-181 is modified to N6-acetyllysine. A Glycyl lysine isopeptide (Lys-Gly) (interchain with G-Cter in SUMO2) cross-link involves residue Lys-256. Position 264 is an N6-acetyllysine (Lys-264). Positions 286–296 (TQNASSSATDS) are enriched in polar residues. The segment at 286 to 323 (TQNASSSATDSRSGRKSKNNTKSSSQQSSSSSSSSSSS) is disordered. The segment covering 308-323 (SSSQQSSSSSSSSSSS) has biased composition (low complexity). A PHD-type zinc finger spans residues 363–412 (PRYCICNQVSYGEMVGCDNQDCPIEWFHYGCVGLTEAPKGKWFCPQCTAA). 8 residues coordinate Zn(2+): Cys-366, Cys-368, Cys-379, Cys-384, His-390, Cys-393, Cys-406, and Cys-409.

Belongs to the ING family. Interacts with H3K4me3 and to a lesser extent with H3K4me2. Component of the NuA4 histone acetyltransferase complex which contains the catalytic subunit KAT5/TIP60 and the subunits EP400, TRRAP/PAF400, BRD8/SMAP, EPC1, DMAP1/DNMAP1, RUVBL1/TIP49, RUVBL2, ING3, actin, ACTL6A/BAF53A, MORF4L1/MRG15, MORF4L2/MRGX, MRGBP, YEATS4/GAS41, VPS72/YL1 and MEAF6. The NuA4 complex interacts with MYC. HTATTIP/TIP60, EPC1, and ING3 together constitute a minimal HAT complex termed Piccolo NuA4. Component of a SWR1-like complex.

The protein resides in the nucleus. In terms of biological role, component of the NuA4 histone acetyltransferase (HAT) complex which is involved in transcriptional activation of select genes principally by acetylation of nucleosomal histones H4 and H2A. This modification may both alter nucleosome - DNA interactions and promote interaction of the modified histones with other proteins which positively regulate transcription. This complex may be required for the activation of transcriptional programs associated with oncogene and proto-oncogene mediated growth induction, tumor suppressor mediated growth arrest and replicative senescence, apoptosis, and DNA repair. NuA4 may also play a direct role in DNA repair when directly recruited to sites of DNA damage. Component of a SWR1-like complex that specifically mediates the removal of histone H2A.Z/H2AZ1 from the nucleosome. In Mus musculus (Mouse), this protein is Inhibitor of growth protein 3 (Ing3).